Here is a 763-residue protein sequence, read N- to C-terminus: DNA-binding protein SATB1 (763 aa).

The segment covering 1 to 15 (MDHLNEATQGKEHSE) has biased composition (basic and acidic residues). The disordered stretch occupies residues 1–54 (MDHLNEATQGKEHSEMSNNVSDPKGPPAKIARLEQNGSPLGRGRLGSTGAKMQG). The Nuclear localization signal motif lies at 20–40 (VSDPKGPPAKIARLEQNGSPL). A Glycyl lysine isopeptide (Lys-Gly) (interchain with G-Cter in SUMO2) cross-link involves residue Lys51. The region spanning 71–172 (GTMLPVFCVV…VVTLKIQLHS (102 aa)) is the CMP domain. N6-acetyllysine is present on Lys136. A Protein interaction motif is present at residues 139–143 (PVPLS). The CUTL domain occupies 175–248 (KLEDLPPEQW…WYKHFKKTKD (74 aa)). A Phosphoserine modification is found at Ser185. The tract at residues 224–278 (YYANVSAAKCQEFGRWYKHFKKTKDMMVEMDSLSELSQQGANHVNFGQQPVPGNT) is nuclear matrix targeting sequence (NMTS). The segment covering 266 to 296 (HVNFGQQPVPGNTAEQPPSPAQLSHGSQPSV) has biased composition (polar residues). A disordered region spans residues 266–307 (HVNFGQQPVPGNTAEQPPSPAQLSHGSQPSVRTPLPNLHPGL). 2 consecutive DNA-binding regions (CUT) follow at residues 361–448 (LEQQ…QDER) and 484–571 (NGKP…EQES). Residues Gln390, 400-410 (RTQGLLSEILR), and Asn425 each bind DNA. Low complexity predominate over residues 591–607 (QIQQQQQQQQQQQQQQQ). Residues 591–649 (QIQQQQQQQQQQQQQQQAPPPPQPQQQPQTGPRLPPRQPTVASPAESDEENRQKTRPRT) are disordered. Ser637 bears the Phosphoserine mark. The homeobox DNA-binding region spans 645–704 (TRPRTKISVEALGILQSFIQDVGLYPDEEAIQTLSAQLDLPKYTIIKFFQNQRYYLKHHG). Residue Lys744 forms a Glycyl lysine isopeptide (Lys-Gly) (interchain with G-Cter in SUMO) linkage.

Belongs to the CUT homeobox family. In terms of assembly, interacts with CUX1 (via DNA-binding domains); the interaction inhibits the attachment of both proteins to DNA. Homodimer. Part of the nuclear protein complex gamma-globin promoter and enhancer binding factor (gamma-PE) composed at least of SATB1 and HOXB2. Interaction with CtBP1 when not acetylated stabilizes attachment to DNA and promotes transcription repression. Interacts with PCAF. Interacts with sumoylated PML and HDAC1 via the CMP domain. Interacts also with DYNLT3 and POLR2J2. Binds to EP300. As to quaternary structure, (Microbial infection) Interacts (via the CMP domain) with HIV-1 Tat. Post-translationally, sumoylated. Sumoylation promotes cleavage by caspases. Phosphorylated by PKC. Acetylated by PCAF. Phosphorylated form interacts with HDAC1, but unphosphorylated form interacts with PCAF. DNA binding properties are activated by phosphorylation and inactivated by acetylation. In opposition, gene expression is down-regulated by phosphorylation but up-regulated by acetylation. In terms of processing, cleaved at Asp-254 by caspase-3 and caspase-6 during T-cell apoptosis in thymus and during B-cell stimulation. The cleaved forms cannot dimerize and lose transcription regulation function because of impaired DNA and chromatin association. As to expression, expressed predominantly in thymus.

It is found in the nucleus matrix. The protein localises to the nucleus. The protein resides in the PML body. In terms of biological role, crucial silencing factor contributing to the initiation of X inactivation mediated by Xist RNA that occurs during embryogenesis and in lymphoma. Binds to DNA at special AT-rich sequences, the consensus SATB1-binding sequence (CSBS), at nuclear matrix- or scaffold-associated regions. Thought to recognize the sugar-phosphate structure of double-stranded DNA. Transcriptional repressor controlling nuclear and viral gene expression in a phosphorylated and acetylated status-dependent manner, by binding to matrix attachment regions (MARs) of DNA and inducing a local chromatin-loop remodeling. Acts as a docking site for several chromatin remodeling enzymes (e.g. PML at the MHC-I locus) and also by recruiting corepressors (HDACs) or coactivators (HATs) directly to promoters and enhancers. Modulates genes that are essential in the maturation of the immune T-cell CD8SP from thymocytes. Required for the switching of fetal globin species, and beta- and gamma-globin genes regulation during erythroid differentiation. Plays a role in chromatin organization and nuclear architecture during apoptosis. Interacts with the unique region (UR) of cytomegalovirus (CMV). Alu-like motifs and SATB1-binding sites provide a unique chromatin context which seems preferentially targeted by the HIV-1 integration machinery. Moreover, HIV-1 Tat may overcome SATB1-mediated repression of IL2 and IL2RA (interleukin) in T-cells by binding to the same domain than HDAC1. Delineates specific epigenetic modifications at target gene loci, directly up-regulating metastasis-associated genes while down-regulating tumor-suppressor genes. Reprograms chromatin organization and the transcription profiles of breast tumors to promote growth and metastasis. Promotes neuronal differentiation of neural stem/progenitor cells in the adult subventricular zone, possibly by positively regulating the expression of NEUROD1. The polypeptide is DNA-binding protein SATB1 (Homo sapiens (Human)).